Reading from the N-terminus, the 468-residue chain is 6-phosphogluconate dehydrogenase, decarboxylating (468 aa).

NADP(+) is bound by residues 9-14 (GLAVMG), 32-34 (NRS), 73-75 (VKA), and Asn101. Residues Asn101 and 127-129 (SGG) contribute to the substrate site. Catalysis depends on Lys182, which acts as the Proton acceptor. 185–186 (HN) is a binding site for substrate. The active-site Proton donor is Glu189. The substrate site is built by Tyr190, Lys259, Arg286, Arg444, and His450.

It belongs to the 6-phosphogluconate dehydrogenase family. As to quaternary structure, homodimer.

It catalyses the reaction 6-phospho-D-gluconate + NADP(+) = D-ribulose 5-phosphate + CO2 + NADPH. It participates in carbohydrate degradation; pentose phosphate pathway; D-ribulose 5-phosphate from D-glucose 6-phosphate (oxidative stage): step 3/3. In terms of biological role, catalyzes the oxidative decarboxylation of 6-phosphogluconate to ribulose 5-phosphate and CO(2), with concomitant reduction of NADP to NADPH. In Staphylococcus epidermidis (strain ATCC 35984 / DSM 28319 / BCRC 17069 / CCUG 31568 / BM 3577 / RP62A), this protein is 6-phosphogluconate dehydrogenase, decarboxylating (gnd).